A 677-amino-acid polypeptide reads, in one-letter code: Forkhead box protein P1 (677 aa).

Polar residues predominate over residues 1-18 (MMQESGTETKSNGSAIQN). A disordered region spans residues 1-43 (MMQESGTETKSNGSAIQNGSGGSNHLLECGGLREGRSNGETPA). Residue S83 is modified to Phosphoserine. The span at 270–283 (IMNPHASTNGQLSV) shows a compositional bias: polar residues. Residues 270 to 298 (IMNPHASTNGQLSVHTPKRESLSHEEHPH) are disordered. Basic and acidic residues predominate over residues 286–298 (PKRESLSHEEHPH). Residue K287 forms a Glycyl lysine isopeptide (Lys-Gly) (interchain with G-Cter in SUMO2) linkage. The C2H2-type zinc finger occupies 306–331 (GVCKWPGCEAVCEDFQSFLKHLNSEH). The tract at residues 348–369 (VQQLELQLAKDKERLQAMMTHL) is leucine-zipper. Glycyl lysine isopeptide (Lys-Gly) (interchain with G-Cter in SUMO2) cross-links involve residues K372 and K377. The tract at residues 382-386 (PLNLV) is CTBP1-binding. The segment covering 390–403 (TLSKSASEASPQSL) has biased composition (polar residues). The disordered stretch occupies residues 390-422 (TLSKSASEASPQSLPHTPTTPTAPLTPVTQGPS). Positions 404–418 (PHTPTTPTAPLTPVT) are enriched in low complexity. K442 participates in a covalent cross-link: Glycyl lysine isopeptide (Lys-Gly) (interchain with G-Cter in SUMO2). Positions 465 to 555 (RPPFTYASLI…PQKISGNPSL (91 aa)) form a DNA-binding region, fork-head. Residues 611–677 (EHTNSNESDS…EDEPVNEDME (67 aa)) form a disordered region. Over residues 612 to 623 (HTNSNESDSSPG) the composition is skewed to polar residues. Position 653 is a phosphothreonine (T653). Phosphoserine is present on S658. A compositionally biased stretch (acidic residues) spans 667–677 (YEDEPVNEDME).

In terms of assembly, forms homodimers and heterodimers with FOXP2 and FOXP4. Dimerization is required for DNA-binding. Self-associates. Interacts with CTBP1. Interacts with NCOR2 and AR. Interacts with FOXP2. Interacts with TBR1. Interacts with AURKA; this interaction facilitates the phosphorylation of FOXP1, which suppresses the expression of FBXL7. Interacts with ZMYM2. In terms of tissue distribution, isoform 8 is specifically expressed in embryonic stem cells.

Its subcellular location is the nucleus. Transcriptional repressor. Can act with CTBP1 to synergistically repress transcription but CTPBP1 is not essential. Plays an important role in the specification and differentiation of lung epithelium. Acts cooperatively with FOXP4 to regulate lung secretory epithelial cell fate and regeneration by restricting the goblet cell lineage program; the function may involve regulation of AGR2. Essential transcriptional regulator of B-cell development. Involved in regulation of cardiac muscle cell proliferation. Involved in the columnar organization of spinal motor neurons. Promotes the formation of the lateral motor neuron column (LMC) and the preganglionic motor column (PGC) and is required for respective appropriate motor axon projections. The segment-appropriate generation of spinal cord motor columns requires cooperation with other Hox proteins. Can regulate PITX3 promoter activity; may promote midbrain identity in embryonic stem cell-derived dopamine neurons by regulating PITX3. Negatively regulates the differentiation of T follicular helper cells T(FH)s. Involved in maintenance of hair follicle stem cell quiescence; the function probably involves regulation of FGF18. Represses transcription of various pro-apoptotic genes and cooperates with NF-kappa B-signaling in promoting B-cell expansion by inhibition of caspase-dependent apoptosis. Binds to CSF1R promoter elements and is involved in regulation of monocyte differentiation and macrophage functions; repression of CSF1R in monocytes seems to involve NCOR2 as corepressor. Involved in endothelial cell proliferation, tube formation and migration indicative for a role in angiogenesis; the role in neovascularization seems to implicate suppression of SEMA5B. Can negatively regulate androgen receptor signaling. Acts as a transcriptional activator of the FBXL7 promoter; this activity is regulated by AURKA. Its function is as follows. Involved in transcriptional regulation in embryonic stem cells (ESCs). Stimulates expression of transcription factors that are required for pluripotency and decreases expression of differentiation-associated genes. Has distinct DNA-binding specifities as compared to the canonical form and preferentially binds DNA with the sequence 5'-CGATACAA-3' (or closely related sequences). Promotes ESC self-renewal and pluripotency. The polypeptide is Forkhead box protein P1 (FOXP1) (Homo sapiens (Human)).